The sequence spans 701 residues: Ephexin-1 (701 aa).

Composition is skewed to basic and acidic residues over residues 1 to 11 (METKNSEDQGK) and 26 to 48 (GPAE…EEPR). Residues 1–141 (METKNSEDQG…TPEECPALTD (141 aa)) are disordered. Positions 1–264 (METKNSEDQG…LDILQPEETK (264 aa)) are regulatory region; modulates activity toward RHOA, RAC1 and CDC42. Residues 120-132 (ASESSSTPGNGTT) show a composition bias toward polar residues. Residue Tyr-172 is modified to Phosphotyrosine. Positions 187-226 (RRQQDAEIQGNSDGSQAGEDNAEEEEEEEEEPASPPERRA) are disordered. Residues 206–218 (DNAEEEEEEEEEP) show a composition bias toward acidic residues. The DH domain occupies 264 to 448 (KLQEAMFELV…EMVVKACNEG (185 aa)). Positions 480–592 (WLLKQGELQQ…WMTSLAPNRR (113 aa)) constitute a PH domain. The region spanning 603 to 664 (LDCPQVQCVH…PSSMTEEILN (62 aa)) is the SH3 domain. The segment covering 679–690 (HKMEDPQRSQNK) has biased composition (basic and acidic residues). The interval 679-701 (HKMEDPQRSQNKDRRKLGSRNRQ) is disordered. The segment covering 691 to 701 (DRRKLGSRNRQ) has biased composition (basic residues).

In terms of assembly, interacts with CDK5R1 and EPHA4; activated by EPHA4 through the CDK5 kinase. Post-translationally, phosphorylation by CDK5 upon EPHA4 activation by EFNA1 may regulate dendritic spine morphogenesis. Src-dependent phosphorylation at Tyr-172 upon EPHA4 activation increases the guanine exchange factor activity toward RHOA. As to expression, expressed in telencephalic neurons (at protein level). Expressed in brain, spinal cord and testis.

The protein localises to the cytoplasm. It is found in the membrane. Its subcellular location is the cell projection. The protein resides in the growth cone. In terms of biological role, acts as a guanine nucleotide exchange factor (GEF) which differentially activates the GTPases RHOA, RAC1 and CDC42. Plays a role in axon guidance regulating ephrin-induced growth cone collapse and dendritic spine morphogenesis. Upon activation by ephrin through EPHA4, the GEF activity switches toward RHOA resulting in its activation. Activated RHOA promotes cone retraction at the expense of RAC1- and CDC42-stimulated growth cone extension. The sequence is that of Ephexin-1 (Ngef) from Rattus norvegicus (Rat).